We begin with the raw amino-acid sequence, 197 residues long: Ribosome maturation factor RimM (197 aa).

Residues 92 to 164 (DEGWYEHELV…YILVTPPPGL (73 aa)) enclose the PRC barrel domain. The interval 167–197 (INVEDSGETSDAGESGPGEAEPGKAEAGDNA) is disordered. Residues 176 to 186 (SDAGESGPGEA) are compositionally biased toward low complexity. Positions 187–197 (EPGKAEAGDNA) are enriched in basic and acidic residues.

This sequence belongs to the RimM family. In terms of assembly, binds ribosomal protein uS19.

Its subcellular location is the cytoplasm. An accessory protein needed during the final step in the assembly of 30S ribosomal subunit, possibly for assembly of the head region. Essential for efficient processing of 16S rRNA. May be needed both before and after RbfA during the maturation of 16S rRNA. It has affinity for free ribosomal 30S subunits but not for 70S ribosomes. The protein is Ribosome maturation factor RimM of Arthrobacter sp. (strain FB24).